The primary structure comprises 448 residues: tRNA(Ile)-lysidine synthase (448 aa).

27 to 32 serves as a coordination point for ATP; that stretch reads SGGVDS.

The protein belongs to the tRNA(Ile)-lysidine synthase family.

It localises to the cytoplasm. The enzyme catalyses cytidine(34) in tRNA(Ile2) + L-lysine + ATP = lysidine(34) in tRNA(Ile2) + AMP + diphosphate + H(+). Functionally, ligates lysine onto the cytidine present at position 34 of the AUA codon-specific tRNA(Ile) that contains the anticodon CAU, in an ATP-dependent manner. Cytidine is converted to lysidine, thus changing the amino acid specificity of the tRNA from methionine to isoleucine. This chain is tRNA(Ile)-lysidine synthase, found in Vibrio campbellii (strain ATCC BAA-1116).